Reading from the N-terminus, the 484-residue chain is Glutamyl-tRNA(Gln) amidotransferase subunit A (484 aa).

Residues Lys-77 and Ser-152 each act as charge relay system in the active site. The active-site Acyl-ester intermediate is the Ser-176.

The protein belongs to the amidase family. GatA subfamily. As to quaternary structure, heterotrimer of A, B and C subunits.

The enzyme catalyses L-glutamyl-tRNA(Gln) + L-glutamine + ATP + H2O = L-glutaminyl-tRNA(Gln) + L-glutamate + ADP + phosphate + H(+). In terms of biological role, allows the formation of correctly charged Gln-tRNA(Gln) through the transamidation of misacylated Glu-tRNA(Gln) in organisms which lack glutaminyl-tRNA synthetase. The reaction takes place in the presence of glutamine and ATP through an activated gamma-phospho-Glu-tRNA(Gln). This is Glutamyl-tRNA(Gln) amidotransferase subunit A from Pseudomonas aeruginosa (strain LESB58).